The chain runs to 534 residues: Kelch repeat and BTB domain-containing protein 4 (534 aa).

The interval 1–25 (MKGGNADSWQREKLASMESPEEPGA) is disordered. The BTB domain occupies 61–128 (ADVTISVEGR…IYHGTVKLRA (68 aa)). Residues 163-255 (CLQVMWLADR…SLKEIGENVH (93 aa)) form the BACK domain. Kelch repeat units follow at residues 255-301 (HIYL…KHGG), 302-344 (DLYV…SVPG), 347-394 (AIYS…NLNG), 396-446 (IYLL…VHKD), and 448-497 (VFIV…VFRD).

As to quaternary structure, component of the BCR(KBTBD4) E3 ubiquitin ligase complex, at least composed of CUL3, KBTBD4 and RBX1.

Its function is as follows. Substrate-specific adapter of a BCR (BTB-CUL3-RBX1) E3 ubiquitin ligase complex which targets CoREST corepressor complex components RCOR1, KDM1A/LSD1 and HDAC2 for proteasomal degradation. RCOR1 is likely to be the primary target while degradation of KDM1A and HDAC2 is likely due to their association with RCOR1. Also targets RCOR3, MIER2 and MIER3 for proteasomal degradation as well as associated proteins ZNF217 and RREB1. Degradation is dependent on the presence of an ELM2 domain in the target proteins. This is Kelch repeat and BTB domain-containing protein 4 (KBTBD4) from Homo sapiens (Human).